The sequence spans 233 residues: Large ribosomal subunit protein eL6z (233 aa).

The segment at 175–195 (EFFEAEKEEKKEIPQEKKEDQ) is disordered.

Belongs to the eukaryotic ribosomal protein eL6 family.

The protein is Large ribosomal subunit protein eL6z (RPL6A) of Arabidopsis thaliana (Mouse-ear cress).